Reading from the N-terminus, the 104-residue chain is uncharacterized protein (104 aa).

The interval 62-92 (SSPAASSHPRKRGKEKKERTPTERLAAPARK) is disordered.

This is an uncharacterized protein from Human adenovirus B serotype 7 (HAdV-7).